The sequence spans 262 residues: Phosphatidylglycerol--prolipoprotein diacylglyceryl transferase (262 aa).

A run of 4 helical transmembrane segments spans residues 17 to 37 (LAIH…YALG), 57 to 77 (LIFY…VLFY), 95 to 115 (GGMS…LFAH), and 119 to 139 (LGFF…LAAG). Arginine 140 contacts a 1,2-diacyl-sn-glycero-3-phospho-(1'-sn-glycerol). 3 helical membrane-spanning segments follow: residues 173–193 (PSQL…LWWY), 200–220 (AGQV…LVEF), and 227–247 (FLGL…PMVL).

This sequence belongs to the Lgt family.

The protein localises to the cell inner membrane. The enzyme catalyses L-cysteinyl-[prolipoprotein] + a 1,2-diacyl-sn-glycero-3-phospho-(1'-sn-glycerol) = an S-1,2-diacyl-sn-glyceryl-L-cysteinyl-[prolipoprotein] + sn-glycerol 1-phosphate + H(+). It participates in protein modification; lipoprotein biosynthesis (diacylglyceryl transfer). Its function is as follows. Catalyzes the transfer of the diacylglyceryl group from phosphatidylglycerol to the sulfhydryl group of the N-terminal cysteine of a prolipoprotein, the first step in the formation of mature lipoproteins. The protein is Phosphatidylglycerol--prolipoprotein diacylglyceryl transferase of Bordetella bronchiseptica (strain ATCC BAA-588 / NCTC 13252 / RB50) (Alcaligenes bronchisepticus).